Consider the following 357-residue polypeptide: Sorbitol dehydrogenase (357 aa).

A2 is modified (N-acetylalanine). C45 is a Zn(2+) binding site. Substrate is bound at residue Y51. Zn(2+) is bound by residues H70 and E71. E156 contributes to the substrate binding site. Residues I184, D204, and R209 each contribute to the NAD(+) site. Phosphoserine is present on residues S211 and S225. NAD(+) is bound by residues 273–275 (VGL) and 297–299 (VFR). The substrate site is built by R299 and Y300.

It belongs to the zinc-containing alcohol dehydrogenase family. Homotetramer. Zn(2+) is required as a cofactor.

It localises to the mitochondrion membrane. The protein localises to the cell projection. Its subcellular location is the cilium. The protein resides in the flagellum. It catalyses the reaction xylitol + NAD(+) = D-xylulose + NADH + H(+). The enzyme catalyses L-iditol + NAD(+) = keto-L-sorbose + NADH + H(+). The catalysed reaction is keto-D-fructose + NADH + H(+) = D-sorbitol + NAD(+). Functionally, polyol dehydrogenase that catalyzes the reversible NAD(+)-dependent oxidation of various sugar alcohols. Is active with xylitol, L-iditol and D-sorbitol (D-glucitol) as substrates, leading to the C2-oxidized products D-xylulose, L-sorbose and D-fructose, respectively. Is a key enzyme in the polyol pathway that interconverts glucose and fructose via sorbitol, which constitutes an important alternate route for glucose metabolism. May play a role in sperm motility by using sorbitol as an alternative energy source for sperm motility. The polypeptide is Sorbitol dehydrogenase (SORD) (Macaca fascicularis (Crab-eating macaque)).